The chain runs to 145 residues: Ribonuclease H (145 aa).

The RNase H type-1 domain maps to 1-142 (MDTPVYLYTD…ADDLANRGAA (142 aa)). Mg(2+) contacts are provided by D10, E48, D70, and D134.

This sequence belongs to the RNase H family. As to quaternary structure, monomer. Mg(2+) is required as a cofactor.

The protein resides in the cytoplasm. The enzyme catalyses Endonucleolytic cleavage to 5'-phosphomonoester.. In terms of biological role, endonuclease that specifically degrades the RNA of RNA-DNA hybrids. In Neisseria gonorrhoeae (strain ATCC 700825 / FA 1090), this protein is Ribonuclease H.